The following is a 144-amino-acid chain: Ninjurin-2 (144 aa).

Over M1–S62 the chain is Extracellular. The tract at residues N27–M39 is helix alpha1. A helix alpha2 region spans residues L40 to G59. Residues Q63–L94 traverse the membrane as a helical segment. The Cytoplasmic portion of the chain corresponds to N95–E98. The chain crosses the membrane as a helical span at residues N99–G128. Q105 contacts cholesterol. Residues A129–I144 are Extracellular-facing.

Belongs to the ninjurin family. Homooligomer; in response to stimuli, homooligomerizes into filaments. In contrast to NINJ1, the filament is curved toward the intracellular space, preventing its circularization on a relatively flat membrane to mediate plasma membrane rupture: curvature is caused by cholesterol-binding at the cytoplasmic leaflet.

The protein resides in the cell membrane. In terms of biological role, its role in unclear. In contrast to NINJ1 paralog, does not mediate plasma membrane rupture (cytolysis) downstream of necroptotic and pyroptotic programmed cell death. While it is able to oligomerize and form filaments, filaments are curved toward the intracellular space, preventing circularization to mediate plasma membrane rupture. May act as a homophilic transmembrane adhesion molecule involved in nerve regeneration. Promotes axonal growth. The sequence is that of Ninjurin-2 (Ninj2) from Rattus norvegicus (Rat).